The primary structure comprises 175 residues: Adenine phosphoribosyltransferase (175 aa).

It belongs to the purine/pyrimidine phosphoribosyltransferase family. In terms of assembly, homodimer.

The protein resides in the cytoplasm. The catalysed reaction is AMP + diphosphate = 5-phospho-alpha-D-ribose 1-diphosphate + adenine. The protein operates within purine metabolism; AMP biosynthesis via salvage pathway; AMP from adenine: step 1/1. Functionally, catalyzes a salvage reaction resulting in the formation of AMP, that is energically less costly than de novo synthesis. The polypeptide is Adenine phosphoribosyltransferase (Clavibacter michiganensis subsp. michiganensis (strain NCPPB 382)).